The chain runs to 352 residues: Photosystem II D2 protein (352 aa).

Residues Cys-40–Thr-60 traverse the membrane as a helical segment. Position 117 (His-117) interacts with chlorophyll a. Residues Gly-124 to Pro-140 form a helical membrane-spanning segment. The pheophytin a site is built by Gln-129 and Asn-142. Residues Val-152–Ser-165 form a helical membrane-spanning segment. Chlorophyll a is bound at residue His-197. The helical transmembrane segment at Gly-207 to Asp-227 threads the bilayer. Positions 214 and 261 each coordinate a plastoquinone. Position 214 (His-214) interacts with Fe cation. His-268 provides a ligand contact to Fe cation. The helical transmembrane segment at Gly-278–Arg-294 threads the bilayer.

This sequence belongs to the reaction center PufL/M/PsbA/D family. PSII is composed of 1 copy each of membrane proteins PsbA, PsbB, PsbC, PsbD, PsbE, PsbF, PsbH, PsbI, PsbJ, PsbK, PsbL, PsbM, PsbT, PsbX, PsbY, PsbZ, Psb30/Ycf12, peripheral proteins PsbO, CyanoQ (PsbQ), PsbU, PsbV and a large number of cofactors. It forms dimeric complexes. The D1/D2 heterodimer binds P680, chlorophylls that are the primary electron donor of PSII, and subsequent electron acceptors. It shares a non-heme iron and each subunit binds pheophytin, quinone, additional chlorophylls, carotenoids and lipids. There is also a Cl(-1) ion associated with D1 and D2, which is required for oxygen evolution. The PSII complex binds additional chlorophylls, carotenoids and specific lipids. serves as cofactor.

The protein resides in the cellular thylakoid membrane. The enzyme catalyses 2 a plastoquinone + 4 hnu + 2 H2O = 2 a plastoquinol + O2. Its function is as follows. Photosystem II (PSII) is a light-driven water:plastoquinone oxidoreductase that uses light energy to abstract electrons from H(2)O, generating O(2) and a proton gradient subsequently used for ATP formation. It consists of a core antenna complex that captures photons, and an electron transfer chain that converts photonic excitation into a charge separation. The D1/D2 (PsbA/PsbD) reaction center heterodimer binds P680, the primary electron donor of PSII as well as several subsequent electron acceptors. D2 is needed for assembly of a stable PSII complex. The chain is Photosystem II D2 protein from Picosynechococcus sp. (strain ATCC 27264 / PCC 7002 / PR-6) (Agmenellum quadruplicatum).